The following is a 77-amino-acid chain: Translational regulator CsrA (77 aa).

The segment at 58–77 (ANRRTAEETLDQASRLLSQK) is disordered. A compositionally biased stretch (polar residues) spans 68–77 (DQASRLLSQK).

It belongs to the CsrA/RsmA family. As to quaternary structure, homodimer; the beta-strands of each monomer intercalate to form a hydrophobic core, while the alpha-helices form wings that extend away from the core.

The protein localises to the cytoplasm. A translational regulator that binds mRNA to regulate translation initiation and/or mRNA stability. Usually binds in the 5'-UTR at or near the Shine-Dalgarno sequence preventing ribosome-binding, thus repressing translation. Its main target seems to be the major flagellin gene, while its function is anatagonized by FliW. The polypeptide is Translational regulator CsrA (Magnetococcus marinus (strain ATCC BAA-1437 / JCM 17883 / MC-1)).